Reading from the N-terminus, the 427-residue chain is 12-alpha,13-alpha-dihydroxyfumitremorgin C prenyltransferase (427 aa).

Glu94 is a substrate binding site. Dimethylallyl diphosphate-binding residues include Arg105, Lys192, Tyr194, Tyr268, Gln353, Tyr355, Tyr419, and Tyr423.

It belongs to the tryptophan dimethylallyltransferase family.

It catalyses the reaction 12alpha,13alpha-dihydroxyfumitremorgin C + dimethylallyl diphosphate = fumitremorgin B + diphosphate. Its pathway is mycotoxin biosynthesis. 12-alpha,13-alpha-dihydroxyfumitremorgin C prenyltransferase; part of the gene cluster that mediates the biosynthesis of fumitremorgins, indole alkaloids that carry not only intriguing chemical structures, but also interesting biological and pharmacological activities. The biosynthesis of fumitremorgin-type alkaloids begins by condensation of the two amino acids L-tryptophan and L-proline to brevianamide F, catalyzed by the non-ribosomal peptide synthetase ftmA. Brevianamide F is then prenylated by the prenyltransferase ftmPT1/ftmB in the presence of dimethylallyl diphosphate, resulting in the formation of tryprostatin B. The three cytochrome P450 monooxygenases, ftmP450-1/ftmC, ftmP450-2/ftmE and ftmP450-3/FtmG, are responsible for the conversion of tryprostatin B to 6-hydroxytryprostatin B, tryprostatin A to fumitremorgin C and fumitremorgin C to 12,13-dihydroxyfumitremorgin C, respectively. The putative methyltransferase ftmMT/ftmD is expected for the conversion of 6-hydroxytryprostatin B to tryprostatin A. FtmPT2/FtmH catalyzes the prenylation of 12,13-dihydroxyfumitre-morgin C in the presence of dimethylallyl diphosphate, resulting in the formation of fumitremorgin B. Fumitremorgin B is further converted to verruculogen by ftmOx1/ftmF via the insertion of an endoperoxide bond between the two prenyl moieties. In some fungal species, verruculogen is further converted to fumitremorgin A, but the enzymes involved in this step have not been identified yet. The protein is 12-alpha,13-alpha-dihydroxyfumitremorgin C prenyltransferase of Aspergillus fumigatus (strain ATCC MYA-4609 / CBS 101355 / FGSC A1100 / Af293) (Neosartorya fumigata).